A 704-amino-acid polypeptide reads, in one-letter code: Translational regulator orb2 (704 aa).

The tract at residues Met1–Ile64 is disordered. The gln/His-rich stretch occupies residues Met1–His87. Residues Ala9–Thr42 are compositionally biased toward low complexity. Phosphoserine occurs at positions 74, 88, and 100. Disordered stretches follow at residues Phe82–Leu106, Leu166–Pro266, and Ser417–Val438. Residues Cys163 to Gly240 are gln/His-rich. Low complexity-rich tracts occupy residues Gln176–Leu205, Gln218–Ser233, and Ser417–Pro429. A phosphoserine mark is found at Ser425 and Ser428. 2 RRM domains span residues Arg447 to Leu538 and Lys555 to Leu637.

As to quaternary structure, monomer. Upon neuronal stimulation, forms stable amyloid-like oligomers composed of isoform A and isoform B which are required for formation of persistent long-term memory. Isoform A is critical for oligomer formation. Phe-5 of isoform A is required for amyloid-like oligomerization. Rapidly forms amyloids and toxic intermediates are extremely transient. Unlike in the adult nervous system, remains monomeric in the early embryo. Interacts with the translational regulator bol. Interacts with Tob; the interaction is enhanced by neuronal stimulation, stabilizes isoform A and induces oligomerization. Phosphorylation regulates interaction with Tob and oligomerization. Protein phosphatase 2A keeps both Orb2 and Tob in an unphosphorylated form. Following synaptic activation, unphosphorylated Orb2 is bound and stabilized by unphosphorylated Tob. Tob recruits activated LimK which phosphorylates both Orb2 and Tob and enhances Orb2 oligomerization. As to expression, broadly expressed throughout the nervous system of embryo, larva and adult including the ventral nerve cord and brain (at protein level). In early embryos, deposited maternally and distributed uniformly throughout the embryo until the extended germband stage. By mid-embryogenesis, highest levels are found in the central and peripheral nervous systems with lower expression also detected in the ectoderm and mesoderm. In adults, high levels are present in the head and body of both sexes with higher expression in testis than ovary. In the ovary, expressed in both germ and follicle cells. In adult head, predominantly neuronal with broad expression throughout the brain and ventral ganglia including the mushroom body.

Its subcellular location is the perikaryon. The protein localises to the cell projection. It localises to the axon. The protein resides in the dendrite. It is found in the synapse. Its subcellular location is the cytoplasm. The protein localises to the perinuclear region. RNA-binding protein involved in translational regulation and required for long-term memory. Required in mushroom body gamma neurons for long-term memory in male courtship. Binds to mRNA 3'-UTRs. In its monomeric form, acts as a translational repressor of genes involved in neuronal growth, synapse formation and protein turnover. In its amyloid-like oligomeric form, acts as a translational activator. The monomeric form reduces poly(A) tail length and destabilizes mRNA while the oligomeric form protects and elongates the poly(A) tail and stabilizes mRNA. Involved in asymmetric cell division in the central nervous system. Plays a role in synapse formation and morphology at neuromuscular junctions by modulating the translation of the tumor suppressor brat. Required for the progression of spermatogenesis through meiosis and for sperm differentiation. During sperm differentiation, required to asymmetrically localize and activate the translation of protein kinase aPKC mRNAs which is necessary for spermatid cyst polarization. Also required during spermatid cyst polarization for localization and translation of its own mRNA. In terms of biological role, required for initial memory acquisition. Following subsequent late dopaminergic pathway activation, recruits isoform B into a complex to activate translation of CaMKII which is required for long-term memory consolidation. This Drosophila melanogaster (Fruit fly) protein is Translational regulator orb2.